The primary structure comprises 120 residues: NAD(P)H-quinone oxidoreductase subunit 3, chloroplastic (120 aa).

3 helical membrane-spanning segments follow: residues 9–29 (IFWAFLIISSAIPVLAFLISG), 64–84 (MFALVFVVFDVETVFLYPWAM), and 88–108 (VLGVSAFIEAFIFVLILILGL).

Belongs to the complex I subunit 3 family. NDH is composed of at least 16 different subunits, 5 of which are encoded in the nucleus.

It localises to the plastid. The protein resides in the chloroplast thylakoid membrane. The enzyme catalyses a plastoquinone + NADH + (n+1) H(+)(in) = a plastoquinol + NAD(+) + n H(+)(out). It catalyses the reaction a plastoquinone + NADPH + (n+1) H(+)(in) = a plastoquinol + NADP(+) + n H(+)(out). NDH shuttles electrons from NAD(P)H:plastoquinone, via FMN and iron-sulfur (Fe-S) centers, to quinones in the photosynthetic chain and possibly in a chloroplast respiratory chain. The immediate electron acceptor for the enzyme in this species is believed to be plastoquinone. Couples the redox reaction to proton translocation, and thus conserves the redox energy in a proton gradient. This is NAD(P)H-quinone oxidoreductase subunit 3, chloroplastic from Lobularia maritima (Sweet alyssum).